The primary structure comprises 340 residues: Putative methionyl-tRNA formyltransferase (340 aa).

This sequence belongs to the Fmt family.

It is found in the mitochondrion. The protein resides in the mitochondrion matrix. Its subcellular location is the cytoplasm. It carries out the reaction L-methionyl-tRNA(fMet) + (6R)-10-formyltetrahydrofolate = N-formyl-L-methionyl-tRNA(fMet) + (6S)-5,6,7,8-tetrahydrofolate + H(+). Its function is as follows. Formylates methionyl-tRNA in mitochondria and the cytoplasm. Responsible for the formylation of the N-terminally formylated (Nt-formylated) mitochondrial matrix proteins that are encoded by mitochondrial DNA. Nt-formylated proteins in the cytoplasm are strongly up-regulated in stationary phase or upon starvation for specific amino acids and are targeted for degradation by an E3 ubiquitin ligase-mediated fMet/N-end rule pathway. Increased Nt-formylation of cytosolic proteins appears to be important for adaptation to these stresses. This chain is Putative methionyl-tRNA formyltransferase (fmt1), found in Schizosaccharomyces pombe (strain 972 / ATCC 24843) (Fission yeast).